The chain runs to 2768 residues: Thyroglobulin (2768 aa).

The signal sequence occupies residues 1 to 19; it reads MALVLEIFTLLASICWVSA. At tyrosine 24 the chain carries Iodotyrosine; alternate. Position 24 is a sulfotyrosine; alternate (tyrosine 24). Thyroxine; alternate is present on tyrosine 24. Tyrosine 24 carries the triiodothyronine; alternate modification. Thyroglobulin type-1 domains are found at residues 31 to 92, 93 to 160, 161 to 297, and 298 to 358; these read LRPC…PVAC, LSFC…PKRC, PRSC…RFRC, and PTKC…PPSC. Intrachain disulfides connect cysteine 34-cysteine 52, cysteine 63-cysteine 70, cysteine 72-cysteine 92, cysteine 96-cysteine 120, cysteine 131-cysteine 138, cysteine 140-cysteine 160, cysteine 164-cysteine 183, cysteine 194-cysteine 235, cysteine 237-cysteine 297, cysteine 301-cysteine 319, cysteine 330-cysteine 336, cysteine 338-cysteine 358, cysteine 364-cysteine 620, cysteine 408-cysteine 608, cysteine 631-cysteine 636, cysteine 638-cysteine 658, cysteine 662-cysteine 687, and cysteine 698-cysteine 703. N-linked (GlcNAc...) asparagine glycosylation is present at asparagine 76. Tyrosine 108 bears the Iodotyrosine mark. Asparagine 110 carries an N-linked (GlcNAc...) asparagine glycan. Tyrosine 149 carries the iodotyrosine; alternate modification. The residue at position 149 (tyrosine 149) is a Diiodotyrosine; alternate. N-linked (GlcNAc...) asparagine glycosylation is present at asparagine 198. Tyrosine 234 and tyrosine 258 each carry iodotyrosine. Asparagine 484 and asparagine 529 each carry an N-linked (GlcNAc...) asparagine glycan. Residues 521 to 545 form a disordered region; that stretch reads PLSVGLDSNSSTGTPEAAKKDGTMN. 6 consecutive Thyroglobulin type-1 domains span residues 605–658, 659–726, 727–921, 922–1073, 1074–1145, and 1146–1210; these read SQTC…QPRC, PTDC…PKKC, PTPC…LPTC, PGSC…IPQC, PTTC…SAQC, and PSLC…QPAC. An Iodotyrosine; alternate modification is found at tyrosine 704. Position 704 is a thyroxine; alternate (tyrosine 704). At tyrosine 704 the chain carries Triiodothyronine; alternate. Tyrosine 704 carries the diiodotyrosine; alternate modification. Intrachain disulfides connect cysteine 705–cysteine 726, cysteine 730–cysteine 763, cysteine 774–cysteine 898, cysteine 900–cysteine 921, cysteine 925–cysteine 1031, cysteine 1042–cysteine 1049, cysteine 1051–cysteine 1073, cysteine 1077–cysteine 1108, cysteine 1126–cysteine 1145, cysteine 1149–cysteine 1169, cysteine 1181–cysteine 1188, cysteine 1190–cysteine 1210, cysteine 1215–cysteine 1264, cysteine 1231–cysteine 1245, cysteine 1306–cysteine 1356, and cysteine 1331–cysteine 1347. Asparagine 748 carries an N-linked (GlcNAc...) asparagine glycan. Tyrosine 785 is subject to Iodotyrosine. Asparagine 816 is a glycosylation site (N-linked (GlcNAc...) asparagine). Tyrosine 866 bears the Iodotyrosine; alternate mark. Tyrosine 866 carries the post-translational modification Diiodotyrosine; alternate. A Diiodotyrosine modification is found at tyrosine 883. Asparagine 947 carries an N-linked (GlcNAc...) asparagine glycan. Tyrosine 992 bears the Iodotyrosine; alternate mark. Position 992 is a diiodotyrosine; alternate (tyrosine 992). Asparagine 1220 carries an N-linked (GlcNAc...) asparagine glycan. Residue tyrosine 1310 is modified to Iodotyrosine. Tyrosine 1310 is modified (thyroxine). N-linked (GlcNAc...) asparagine glycans are attached at residues asparagine 1348, asparagine 1349, and asparagine 1365. 9 disulfides stabilise this stretch: cysteine 1440–cysteine 1459, cysteine 1462–cysteine 1473, cysteine 1476–cysteine 1490, cysteine 1493–cysteine 1510, cysteine 1514–cysteine 1523, cysteine 1543–cysteine 1565, cysteine 1603–cysteine 1627, cysteine 1607–cysteine 1613, and cysteine 1639–cysteine 1662. Type II repeat units lie at residues 1456 to 1469, 1470 to 1486, and 1487 to 1503; these read GLGC…SYSQ, DEEC…EQAG, and SLAC…ISAG. At tyrosine 1467 the chain carries Iodotyrosine; alternate. Position 1467 is a diiodotyrosine; alternate (tyrosine 1467). Positions 1511-1565 constitute a Thyroglobulin type-1 11 domain; sequence VTDCQRNEAGLQCDQNGQYRASQKDRGSGKAFCVDGEGRRLPWWETEAPLEDSQC. The stretch at 1603 to 1723 is one Type IIIA repeat; sequence CLTDCTEDEA…GANLTDAHLF (121 aa). Asparagine 1716 carries N-linked (GlcNAc...) asparagine glycosylation. 4 disulfide bridges follow: cysteine 1724-cysteine 1749, cysteine 1728-cysteine 1734, cysteine 1733-cysteine 1835, and cysteine 1760-cysteine 1777. Residues 1724 to 1892 form a Type IIIB repeat; the sequence is CLLACDRDLC…LFSAQQANLW (169 aa). Residues asparagine 1774 and asparagine 1869 are each glycosylated (N-linked (GlcNAc...) asparagine). Cystine bridges form between cysteine 1893/cysteine 1919, cysteine 1897/cysteine 1904, cysteine 1928/cysteine 1939, cysteine 1996/cysteine 2024, cysteine 2000/cysteine 2006, cysteine 2005/cysteine 2076, and cysteine 2035/cysteine 2048. Residues 1893–1995 form a Type IIIA repeat; it reads CLSRCVQEHS…EKSISNGFFE (103 aa). One copy of the Type IIIB repeat lies at 1996 to 2129; it reads CERRCDADPC…TSNFSAVRDL (134 aa). Asparagine 2013 is a glycosylation site (N-linked (GlcNAc...) asparagine). Asparagine 2122 carries an N-linked (GlcNAc...) asparagine glycan. Disulfide bonds link cysteine 2130–cysteine 2154, cysteine 2134–cysteine 2140, and cysteine 2163–cysteine 2172. The stretch at 2130-2187 is one Type IIIA repeat; the sequence is CLSECSQHEACLITTLQTQPGAVRCMFYADTQSCTHSLQGQNCRLLLREEATHIYRKP. Tyrosine 2184 bears the Iodotyrosine mark. The cholinesterase-like (ChEL) stretch occupies residues 2188-2768; that stretch reads GISLLSYEAS…QEPGSKTYSK (581 aa). Asparagine 2250 carries an N-linked (GlcNAc...) asparagine glycan. A disulfide bridge links cysteine 2264 with cysteine 2281. Asparagine 2295 carries an N-linked (GlcNAc...) asparagine glycan. Cysteine 2442 and cysteine 2453 are disulfide-bonded. At tyrosine 2540 the chain carries Iodotyrosine. Residue tyrosine 2573 is modified to Iodotyrosine; alternate. Position 2573 is a thyroxine; alternate (tyrosine 2573). At tyrosine 2573 the chain carries Triiodothyronine; alternate. At tyrosine 2573 the chain carries Diiodotyrosine; alternate. Asparagine 2582 is a glycosylation site (N-linked (GlcNAc...) asparagine). Iodotyrosine is present on residues tyrosine 2587 and tyrosine 2617. A disulfide bond links cysteine 2591 and cysteine 2715. Tyrosine 2697 is subject to Diiodotyrosine. The tract at residues 2727 to 2768 is disordered; it reads TSADGAKGGQSAESEEEELTAGSGLREDLLSLQEPGSKTYSK. Serine 2749 carries an O-linked (Xyl...) (chondroitin sulfate) serine glycan. Tyrosine 2766 is subject to Iodotyrosine; alternate. A Thyroxine; alternate modification is found at tyrosine 2766. The residue at position 2766 (tyrosine 2766) is a Triiodothyronine; alternate. Tyrosine 2766 carries the diiodotyrosine; alternate modification.

It belongs to the type-B carboxylesterase/lipase family. In terms of assembly, monomer. Homodimer (via ChEL region); occurs in the endoplasmic reticulum and is required for export to the Golgi apparatus. Homooligomer; disulfide-linked; stored in this form in the thyroid follicle lumen. Post-translationally, iodinated on tyrosine residues by TPO. There are 4 pairs of iodinated tyrosines used for coupling: acceptor Tyr-24 is coupled to donor Tyr-149 or Tyr-234, acceptor Tyr-2573 is coupled to donor Tyr-2540, acceptor Tyr-2766 in monomer 1 is coupled to donor Tyr-2766 in monomer 2 and acceptor Tyr-1310 in monomer 1 is coupled to donor Tyr-108 in monomer 2. Sulfated tyrosines are desulfated during iodination. In terms of processing, undergoes sequential proteolysis by cathepsins to release thyroxine (T4) and triiodothyronine (T3) hormones. In the thyroid follicle lumen, cross-linked TG (storage form) is solubilized by limited proteolysis mediated by cathepsins CTSB and/or CTSL. Partially cleaved TG is further processed by CTSK/cathepsin K and/or CTSL resulting in the release of T4. Following endocytosis, further processing occurs leading to the release of T3 and more T4 hormones. Specifically expressed in the thyroid gland.

Its subcellular location is the secreted. Its function is as follows. Acts as a substrate for the production of iodinated thyroid hormones thyroxine (T4) and triiodothyronine (T3). The synthesis of T3 and T4 involves iodination of selected tyrosine residues of TG/thyroglobulin followed by their oxidative coupling in the thyroid follicle lumen. Following TG re-internalization and lysosomal-mediated proteolysis, T3 and T4 are released from the polypeptide backbone leading to their secretion into the bloodstream. One dimer produces 7 thyroid hormone molecules. The polypeptide is Thyroglobulin (Homo sapiens (Human)).